The chain runs to 266 residues: Tryptophan synthase alpha chain (266 aa).

Catalysis depends on proton acceptor residues glutamate 52 and aspartate 63.

Belongs to the TrpA family. Tetramer of two alpha and two beta chains.

The enzyme catalyses (1S,2R)-1-C-(indol-3-yl)glycerol 3-phosphate + L-serine = D-glyceraldehyde 3-phosphate + L-tryptophan + H2O. It participates in amino-acid biosynthesis; L-tryptophan biosynthesis; L-tryptophan from chorismate: step 5/5. In terms of biological role, the alpha subunit is responsible for the aldol cleavage of indoleglycerol phosphate to indole and glyceraldehyde 3-phosphate. The chain is Tryptophan synthase alpha chain from Nocardia farcinica (strain IFM 10152).